A 420-amino-acid polypeptide reads, in one-letter code: Putative transporter AmpG 3 (420 aa).

Helical transmembrane passes span 6 to 26, 41 to 61, 79 to 99, 104 to 124, 141 to 161, 166 to 186, 230 to 250, 274 to 294, 297 to 317, 324 to 344, 359 to 381, and 386 to 406; these read YLIGILLLGLISGLTFNLIFF, IVGSISLAAFPYCLKVIWSPF, GWALVSQIFLILTMMWFLKRS, LCITAIILFIIAFCSSTQDIV, IAFTFSSIGFRLGMLLGSVGA, IIFGWNTVYKFALFITMVGPI, LLLIILFVFLYKAADSIPMAM, LLIMIVGGTLGGILAAKIGIF, VLIGGVIQLLSPIMFMILATI, FIITITIQNFCSGFAGTIISI, YSISSSFSSLSRIILASLGGICA, and WPVFFLCNTLFSMLFIPIFYI.

The protein belongs to the major facilitator superfamily.

It is found in the cell inner membrane. This is Putative transporter AmpG 3 (ampG3) from Rickettsia typhi (strain ATCC VR-144 / Wilmington).